A 51-amino-acid polypeptide reads, in one-letter code: Defensin-like protein 1 (51 aa).

Gln-1 carries the post-translational modification Pyrrolidone carboxylic acid. Cystine bridges form between Cys-4–Cys-51, Cys-15–Cys-36, Cys-21–Cys-45, and Cys-25–Cys-47.

In terms of assembly, forms oligomers in its native state.

In terms of biological role, possesses antifungal activity sensitive to inorganic cations. The polypeptide is Defensin-like protein 1 (Sinapis alba (White mustard)).